Here is a 172-residue protein sequence, read N- to C-terminus: RNA pyrophosphohydrolase (172 aa).

In terms of domain architecture, Nudix hydrolase spans 8–153 (QHRPNVGVVL…KRGVYEAVVA (146 aa)). The short motif at 43–64 (GGVDEGEDLEVAARRELAEETG) is the Nudix box element.

It belongs to the Nudix hydrolase family. RppH subfamily. It depends on a divalent metal cation as a cofactor.

In terms of biological role, accelerates the degradation of transcripts by removing pyrophosphate from the 5'-end of triphosphorylated RNA, leading to a more labile monophosphorylated state that can stimulate subsequent ribonuclease cleavage. This is RNA pyrophosphohydrolase from Caulobacter vibrioides (strain ATCC 19089 / CIP 103742 / CB 15) (Caulobacter crescentus).